Here is an 880-residue protein sequence, read N- to C-terminus: Nonsense-mediated mRNA decay factor SMG7-like (880 aa).

TPR repeat units lie at residues 149–183 and 184–217; these read QEQY…NPHN and QLAV…GASN. The disordered stretch occupies residues 669 to 711; sequence RLGLSKPNGLGPIDETGPVSAFDSLSINSSTEHPASSYSPPTP. Positions 691-701 are enriched in polar residues; the sequence is DSLSINSSTEH.

May play a role in growth and development. In Arabidopsis thaliana (Mouse-ear cress), this protein is Nonsense-mediated mRNA decay factor SMG7-like.